The primary structure comprises 338 residues: MELLINNKIKITINLPSKIDWINIPTFLDNYSDDESKITVLKKIVSKNQLTGTIYPTIINVLEMFGSDENKFRVFKIIKNHVLLIADINLLIDLIGLFIDDCFKMKLILEFNHHIYNVKHPFLEFMVKTINSDKNKIHVLSILVPKVLVLDNEDIIRTVHYLSDSFILVDFFKLISPKSKLSFDNVVDIMYTIKSDQQNLKILDVLVSNGFKVCPDQLLEMCRALKSTKSMTKMIGKIPLAKNISDTDKFCEKLAQIIIHPTDYINATDILNINQKISLQYKPHSQGNIIVSGFLTSHVVQKVFCEHEKTTIVYSNSTTMKWTKHSTEYTFINDNDAV.

This is an uncharacterized protein from Acanthamoeba polyphaga (Amoeba).